Here is an 852-residue protein sequence, read N- to C-terminus: Lon protease homolog 2, peroxisomal (852 aa).

An N-acetylserine modification is found at Ser-2. Residues 13-222 (LPLLLTHEGV…MTIPLLVRQI (210 aa)) form the Lon N-terminal domain. 375–382 (GPPGVGKT) is a binding site for ATP. One can recognise a Lon proteolytic domain in the interval 651–837 (LSQPGVAIGL…DEVLNAAFDG (187 aa)). Catalysis depends on residues Ser-743 and Lys-786. A Microbody targeting signal motif is present at residues 850 to 852 (SKL).

It belongs to the peptidase S16 family. Interacts with PEX5. Interacts with TYSND1. May interact with enzymes involved in beta-oxidation of fatty acids, including ACOX1/AOX. In terms of tissue distribution, widely expressed, with high levels in the liver, kidney and pancreas.

The protein resides in the peroxisome matrix. The catalysed reaction is Hydrolysis of proteins in presence of ATP.. Its function is as follows. ATP-dependent serine protease that mediates the selective degradation of misfolded and unassembled polypeptides in the peroxisomal matrix. Necessary for type 2 peroxisome targeting signal (PTS2)-containing protein processing and facilitates peroxisome matrix protein import. May indirectly regulate peroxisomal fatty acid beta-oxidation through degradation of the self-processed forms of TYSND1. This Homo sapiens (Human) protein is Lon protease homolog 2, peroxisomal.